Here is a 383-residue protein sequence, read N- to C-terminus: L-Ala-D/L-Glu epimerase (383 aa).

Residues Arg68, Tyr94, and 198–200 (KVK) contribute to the substrate site. The Mg(2+) site is built by Asp224, Glu251, and Asp276. Substrate-binding positions include Lys298, 326–328 (CMT), and 348–350 (DLD).

It belongs to the mandelate racemase/muconate lactonizing enzyme family. Mg(2+) serves as cofactor.

The catalysed reaction is L-alanyl-L-glutamate = L-alanyl-D-glutamate. Its function is as follows. Catalyzes the epimerization of L-Ala-D-Glu to L-Ala-L-Glu and may play a role in the metabolism of the murein peptide, of which L-Ala-D-Glu is a component. Is also able to catalyze the epimerization of L-Ala-D-Asp, L-Ala-L-Glu, L-Ala-L-Ser, L-Ala-L-Pro, L-Ala-L-L-Val, L-Ala-L-Thr, L-Ala-L-Leu, L-Ala-L-Ile and L-Gly-L-Glu (in vitro). This Bacteroides thetaiotaomicron (strain ATCC 29148 / DSM 2079 / JCM 5827 / CCUG 10774 / NCTC 10582 / VPI-5482 / E50) protein is L-Ala-D/L-Glu epimerase.